The following is a 156-amino-acid chain: Terrestric acid biosynthesis cluster protein E (156 aa).

It functions in the pathway secondary metabolite biosynthesis. Functionally, part of the tra gene cluster that produces terrestric acid. The clavatol biosynthesis cluster cla and the terrestric acid cluster tra are both involved in the production of peniphenones and penilactones. The non-reducing PKS claF is responsible for the formation of clavatol from successive condensations of 3 malonyl-CoA units, presumably with a simple acetyl-CoA starter unit, and 2 methylation steps. The esterase claE probably collaborates with claF by catalyzing the hydrolysis of ACP-bound acyl intermediates to free the ACP from stalled intermediates. The clavatol oxidase claD then converts clavatol to hydroxyclavatol. Spontaneous dehydration of hydroxyclavatol leads to the accumulation of the highly active ortho-quinone methide. On the other hand, the PKS-NRPS hybrid traA is involved in the formation of crustosic acid, with the help of traB and traD. The polyketide synthase module (PKS) of traA is responsible for the synthesis of the polyketide backbone via the condensation of an acetyl-CoA starter unit with 3 malonyl-CoA units. The downstream nonribosomal peptide synthetase (NRPS) module then amidates the carboxyl end of the polyketide with L-malic acid. Because traA lacks a designated enoylreductase (ER) domain, the required activity is provided the enoyl reductase traG. Crustosic acid undergoes decarboxylation and isomerization to the terrestric acid, catalyzed by the 2-oxoglutarate-dependent dioxygenase traH. Both acids are further converted to the 2 gamma-butyrolactones (R)-5-methyltetronic acid and (S)-5-carboxylmethyltetronic acid, with involvement of the cytochrome P450 monooxygenase claJ. Spontaneous addition of the methide to these gamma-butyrolactones leads to peniphenone D and penilactone D, which undergo again stereospecific attacking by methide to give penilactones A and B. TraE seems not to be involved in the biosynthesis of peniphenones and penilactones in the conditions used to study its function. The protein is Terrestric acid biosynthesis cluster protein E of Penicillium crustosum (Blue mold fungus).